Consider the following 154-residue polypeptide: MEKLPNTVVKVHGEGMESKLFPRKLHKDTNSILREDLVSACQEHIEALVEGMIAHGDGRKVAELDTSTQYYWHLKLVEYTPIPGRTQHYVDLVDGTNPDVCYFSLCDCSGDNITDRRWSNMVKRLQNPEEDIAKTLRCYFRQDAGMPSWIEYPQ.

The polypeptide is Putative gene 41 protein (41) (Bacillus phage SP01 (Bacteriophage SP01)).